Consider the following 226-residue polypeptide: Insulin-like growth factor-binding protein 6 (226 aa).

Positions 1 to 25 are cleaved as a signal peptide; that stretch reads MTWDGLPTQPLLMLLMLLFAAGSES. An IGFBP N-terminal domain is found at 26–99; sequence ALAGCPGCGP…LIGQGRCQRA (74 aa). 4 disulfides stabilise this stretch: Cys30/Cys33, Cys49/Cys55, Cys63/Cys76, and Cys70/Cys96. Residues 92-148 are disordered; sequence GQGRCQRARGPSEETTKESKPHGGASRPRDRDRQKNPRTSAAPIRPSPVQDGEMGPC. Over residues 101–126 the composition is skewed to basic and acidic residues; that stretch reads GPSEETTKESKPHGGASRPRDRDRQK. The 76-residue stretch at 145–220 folds into the Thyroglobulin type-1 domain; the sequence is MGPCRRHLDS…SPDGQGSSQC (76 aa). Disulfide bonds link Cys148/Cys176, Cys187/Cys198, and Cys200/Cys220. Positions 205 to 226 are disordered; it reads GQPLPVSPDGQGSSQCSARSSG. Over residues 214–226 the composition is skewed to polar residues; sequence GQGSSQCSARSSG.

In terms of assembly, interacts (via C-terminal domain) with PHB2. O-glycosylated.

It localises to the secreted. In terms of biological role, IGF-binding proteins prolong the half-life of the IGFs and have been shown to either inhibit or stimulate the growth promoting effects of the IGFs on cell culture. They alter the interaction of IGFs with their cell surface receptors. Activates the MAPK signaling pathway and induces cell migration. In Rattus norvegicus (Rat), this protein is Insulin-like growth factor-binding protein 6 (Igfbp6).